Here is a 169-residue protein sequence, read N- to C-terminus: NAD(P)H-quinone oxidoreductase subunit 6, chloroplastic (169 aa).

5 helical membrane-spanning segments follow: residues 7-27 (FSSA…IFLP), 29-49 (IVYA…IYVL), 58-78 (AQVL…IMLV), 90-110 (SPPL…VQMI), and 139-159 (LLAF…AIVL).

This sequence belongs to the complex I subunit 6 family. NDH is composed of at least 16 different subunits, 5 of which are encoded in the nucleus.

Its subcellular location is the plastid. It is found in the chloroplast thylakoid membrane. The enzyme catalyses a plastoquinone + NADH + (n+1) H(+)(in) = a plastoquinol + NAD(+) + n H(+)(out). It catalyses the reaction a plastoquinone + NADPH + (n+1) H(+)(in) = a plastoquinol + NADP(+) + n H(+)(out). In terms of biological role, NDH shuttles electrons from NAD(P)H:plastoquinone, via FMN and iron-sulfur (Fe-S) centers, to quinones in the photosynthetic chain and possibly in a chloroplast respiratory chain. The immediate electron acceptor for the enzyme in this species is believed to be plastoquinone. Couples the redox reaction to proton translocation, and thus conserves the redox energy in a proton gradient. This Nephroselmis olivacea (Green alga) protein is NAD(P)H-quinone oxidoreductase subunit 6, chloroplastic (ndhG).